The chain runs to 148 residues: Large ribosomal subunit protein uL15 (148 aa).

The tract at residues M1–E51 is disordered. Gly residues predominate over residues R21–S31.

This sequence belongs to the universal ribosomal protein uL15 family. Part of the 50S ribosomal subunit.

In terms of biological role, binds to the 23S rRNA. This is Large ribosomal subunit protein uL15 from Bacteroides thetaiotaomicron (strain ATCC 29148 / DSM 2079 / JCM 5827 / CCUG 10774 / NCTC 10582 / VPI-5482 / E50).